The following is a 128-amino-acid chain: Small ribosomal subunit protein uS11 (128 aa).

Belongs to the universal ribosomal protein uS11 family. In terms of assembly, part of the 30S ribosomal subunit. Interacts with proteins S7 and S18. Binds to IF-3.

Its function is as follows. Located on the platform of the 30S subunit, it bridges several disparate RNA helices of the 16S rRNA. Forms part of the Shine-Dalgarno cleft in the 70S ribosome. The sequence is that of Small ribosomal subunit protein uS11 from Wolbachia pipientis wMel.